The sequence spans 764 residues: 5-methyltetrahydropteroyltriglutamate--homocysteine methyltransferase (764 aa).

5-methyltetrahydropteroyltri-L-glutamate contacts are provided by residues 16 to 19 and Lys121; that span reads RELK. L-homocysteine-binding positions include 440 to 442 and Glu493; that span reads IGS. L-methionine is bound by residues 440 to 442 and Glu493; that span reads IGS. Residues 524–525 and Trp570 each bind 5-methyltetrahydropteroyltri-L-glutamate; that span reads RC. Asp608 contacts L-homocysteine. An L-methionine-binding site is contributed by Asp608. Position 614 (Glu614) interacts with 5-methyltetrahydropteroyltri-L-glutamate. The Zn(2+) site is built by His650, Cys652, and Glu674. His703 (proton donor) is an active-site residue. A Zn(2+)-binding site is contributed by Cys735.

This sequence belongs to the vitamin-B12 independent methionine synthase family. Requires Zn(2+) as cofactor.

It catalyses the reaction 5-methyltetrahydropteroyltri-L-glutamate + L-homocysteine = tetrahydropteroyltri-L-glutamate + L-methionine. The protein operates within amino-acid biosynthesis; L-methionine biosynthesis via de novo pathway; L-methionine from L-homocysteine (MetE route): step 1/1. Its function is as follows. Catalyzes the transfer of a methyl group from 5-methyltetrahydrofolate to homocysteine resulting in methionine formation. The protein is 5-methyltetrahydropteroyltriglutamate--homocysteine methyltransferase of Burkholderia ambifaria (strain ATCC BAA-244 / DSM 16087 / CCUG 44356 / LMG 19182 / AMMD) (Burkholderia cepacia (strain AMMD)).